A 327-amino-acid polypeptide reads, in one-letter code: Phenylalanine--tRNA ligase alpha subunit (327 aa).

E252 contributes to the Mg(2+) binding site.

The protein belongs to the class-II aminoacyl-tRNA synthetase family. Phe-tRNA synthetase alpha subunit type 1 subfamily. As to quaternary structure, tetramer of two alpha and two beta subunits. Mg(2+) is required as a cofactor.

The protein localises to the cytoplasm. It catalyses the reaction tRNA(Phe) + L-phenylalanine + ATP = L-phenylalanyl-tRNA(Phe) + AMP + diphosphate + H(+). This Salmonella newport (strain SL254) protein is Phenylalanine--tRNA ligase alpha subunit.